The chain runs to 813 residues: MYDSKKLELKWQEIWDKEGIFEPKKDYNLQKKYILSMFPYPSGRIHMGHVRNYTIGDAISRYYRMQGYNVLQPIGFDSFGMPAENAAIKHKIHPKKWTYDNIDYMTKELFRLGFSFSKNRILATSDPIYTKFEQEFFIKMFEKGLIYRKNAVVNWCEQDQTVLANEQVEDGKCWRCGNEVVQKEMPGYYLKITSYADELLSCLKDLQNHWPSQVITMQENWIGKSFGLEFDFKFDDESSKKLGGVKSFKVFTTRPDTIYGMSYAALAPEHAVVKAVLEKNLVSKETADKIKKILNQSPRERQANDKDGAFLNLFAIHPLSGKKIPVWMANFVLAEYGGGAVMAVPAHDERDFEFAHKFNLPIIQSIGAKNGENVKLPYIESGILVDSAEFSGLENEDAKMKIIEKFEKEKIGKRVTNYKLRDWGISRQRYWGAPIPMIKCPKCGLVPEKIKNLPVTLPDDIKITGKGNPLDKHPTWKHCTCPKCGAEAERETDTLDTFFDSSWYFARFTSDENMWQEKGIDEKSANYWMNVDQYIGGIEHAILHLLYARFFQKVLRDLGYLRDSEPFANLLTQGMVLKDGAKMSKSKGNVVDPDEIIEKYGADTARLFILFAAPPQKELEWNDSAVEGAYKFLNRLYERSQNVQKTREIPKIDQSSLNKAEKYARLKVYEALQKSSEVYEKTFAFNTLIAACMEALNALNAQENRQILTEGYFIILNLLDPIVPHIACELSENLFGRANFTPIKILPEVFEKDEIRLAVTVNGKKRAEIEVASDLSQSEILKIAKEQVLKWLENKKIIKEIYIKNKLVNLVVK.

Residues 39-49 (PYPSGRIHMGH) carry the 'HIGH' region motif. The 'KMSKS' region motif lies at 582-586 (KMSKS). An ATP-binding site is contributed by lysine 585.

The protein belongs to the class-I aminoacyl-tRNA synthetase family.

It localises to the cytoplasm. It carries out the reaction tRNA(Leu) + L-leucine + ATP = L-leucyl-tRNA(Leu) + AMP + diphosphate. The protein is Leucine--tRNA ligase of Campylobacter hominis (strain ATCC BAA-381 / DSM 21671 / CCUG 45161 / LMG 19568 / NCTC 13146 / CH001A).